The sequence spans 147 residues: Biogenesis of lysosome-related organelles complex 1 subunit 1 (147 aa).

Disordered stretches follow at residues M1–K25 and S125–T147.

This sequence belongs to the BLOC1S1 family. In terms of assembly, component of the biogenesis of lysosome-related organelles complex-1 (BLOC-1) composed of Blos1, Blos2, Blos3, Blos4, Dysb, Muted, Pldn and Snapin. Interacts with Pldn.

Its function is as follows. Component of the biogenesis of lysosome-related organelles complex-1 (BLOC-1) involved in pigment granule biogenesis and membrane trafficking in synapses. In response to high synaptic activity at neuromuscular junctions, stabilizes Pldn protein levels and, together with Pldn, plays a role in promoting efficient synaptic vesicle recycling and re-formation through early endosomes. The protein is Biogenesis of lysosome-related organelles complex 1 subunit 1 of Drosophila melanogaster (Fruit fly).